We begin with the raw amino-acid sequence, 387 residues long: Phosphoglycerate kinase (387 aa).

Residues 21 to 23 (DLN), Arg36, 59 to 62 (HLGR), Arg113, and Arg146 each bind substrate. ATP contacts are provided by residues Lys197, Glu314, and 340-343 (GGDT).

It belongs to the phosphoglycerate kinase family. In terms of assembly, monomer.

The protein resides in the cytoplasm. The catalysed reaction is (2R)-3-phosphoglycerate + ATP = (2R)-3-phospho-glyceroyl phosphate + ADP. The protein operates within carbohydrate degradation; glycolysis; pyruvate from D-glyceraldehyde 3-phosphate: step 2/5. The chain is Phosphoglycerate kinase from Pseudomonas entomophila (strain L48).